A 747-amino-acid chain; its full sequence is DNA damage checkpoint protein LCD1 (747 aa).

Phosphoserine occurs at positions 10, 11, and 76. A coiled-coil region spans residues 62 to 139; it reads NQLVNQLNKA…MEARGKSKRE (78 aa). The disordered stretch occupies residues 145–180; sequence KPPSTTLSTNTNTITPDSSSVAIEAKPQSPQSKKRK. A compositionally biased stretch (low complexity) spans 146–160; sequence PPSTTLSTNTNTITP.

As to quaternary structure, forms a complex with MEC1. Post-translationally, phosphorylated by MEC1 in a cell cycle dependent manner and in response to DNA damage.

The protein localises to the cytoplasm. The protein resides in the nucleus. In terms of biological role, forms a complex with the serine/threonine kinase MEC1 which activates checkpoint signaling upon genotoxic stresses. The MEC1-LCD1 complex is recruited by the single-strand-binding protein complex RPA to DNA lesions in order to initiate the DNA repair by homologous recombination, after the MRX-complex and TEL1 are displaced. Required for the recruitment of MEC1 to DNA lesions, the activation of CHK1 and RAD53 kinases and phosphorylation of RAD9 in response to DNA damage. Required for cell growth and meiotic recombination. This Saccharomyces cerevisiae (strain ATCC 204508 / S288c) (Baker's yeast) protein is DNA damage checkpoint protein LCD1 (LCD1).